The following is a 330-amino-acid chain: D-cysteine desulfhydrase (330 aa).

Lys-52 bears the N6-(pyridoxal phosphate)lysine mark.

This sequence belongs to the ACC deaminase/D-cysteine desulfhydrase family. In terms of assembly, homodimer. Pyridoxal 5'-phosphate serves as cofactor.

The catalysed reaction is D-cysteine + H2O = hydrogen sulfide + pyruvate + NH4(+) + H(+). Its function is as follows. Catalyzes the alpha,beta-elimination reaction of D-cysteine and of several D-cysteine derivatives. It could be a defense mechanism against D-cysteine. This is D-cysteine desulfhydrase from Serratia proteamaculans (strain 568).